The primary structure comprises 575 residues: U3 small nucleolar RNA-associated protein 9 (575 aa).

Basic and acidic residues-rich tracts occupy residues 340–355 (NEKNNADEADQKKLEE) and 364–375 (VQHEKKETETKI). Residues 340–375 (NEKNNADEADQKKLEEKEEEAQPEVQHEKKETETKI) are disordered. Phosphoserine occurs at positions 547 and 564.

As to quaternary structure, interacts with snoRNA U3. Interacts with MPP10. Component of the ribosomal small subunit (SSU) processome composed of at least 40 protein subunits and snoRNA U3. In the absence of snoRNA3, forms a complex with other t-UTPs. This complex can associate with pre-18S ribosomal RNAs.

It is found in the nucleus. The protein localises to the nucleolus. Functionally, involved in nucleolar processing of pre-18S ribosomal RNA. Required for optimal pre-ribosomal RNA transcription by RNA polymerase I together with a subset of U3 proteins required for transcription (t-UTPs). This is U3 small nucleolar RNA-associated protein 9 (UTP9) from Saccharomyces cerevisiae (strain ATCC 204508 / S288c) (Baker's yeast).